We begin with the raw amino-acid sequence, 182 residues long: CASP-like protein 2B1 (182 aa).

The Cytoplasmic segment spans residues 1-12 (MKLIDRRMRLTE). The helical transmembrane segment at 13–31 (LLLRCSISVFALLALILVV) threads the bilayer. At 32-52 (TDTEVKLIFTIKKTAKYTDMK) the chain is on the extracellular side. Residues 53 to 73 (AVVFLVVANGIAAVYSLLQSV) traverse the membrane as a helical segment. Over 74–89 (RCVVGTMKGKVLFSKP) the chain is Cytoplasmic. The helical transmembrane segment at 90–110 (LAWAFFSGDQAMAYLNVAAIA) threads the bilayer. The Extracellular segment spans residues 111-141 (ATAESGVIAREGEEDLQWMRVCTMYGKFCNQ). A helical membrane pass occupies residues 142–162 (MAIGVSSALLASIAMVFVSCI). At 163-182 (SAFSLFRLYGATKDRRTTPW) the chain is on the cytoplasmic side.

It belongs to the Casparian strip membrane proteins (CASP) family. Homodimer and heterodimers.

The protein localises to the cell membrane. The polypeptide is CASP-like protein 2B1 (Arabidopsis thaliana (Mouse-ear cress)).